A 166-amino-acid polypeptide reads, in one-letter code: Sperm-egg fusion protein TMEM95 (166 aa).

The N-terminal stretch at methionine 1–alanine 16 is a signal peptide. Disulfide bonds link cysteine 17-cysteine 118, cysteine 20-cysteine 121, cysteine 105-cysteine 128, and cysteine 109-cysteine 134. Over cysteine 17–arginine 145 the chain is Extracellular. A glycan (N-linked (GlcNAc...) asparagine) is linked at asparagine 117. The chain crosses the membrane as a helical span at residues isoleucine 146–valine 165. A topological domain (cytoplasmic) is located at residue glutamate 166.

The protein belongs to the TMEM95 family. As to quaternary structure, does not interact with sperm-egg fusion proteins IZUMO1 or IZUMO1R/JUNO. In terms of processing, N-glycosylated. In terms of tissue distribution, detected in testis and brain with higher levels in brain than testis.

Its subcellular location is the cytoplasmic vesicle. It is found in the secretory vesicle. It localises to the acrosome membrane. Sperm protein required for fusion of sperm with the egg membrane during fertilization. The protein is Sperm-egg fusion protein TMEM95 of Bos taurus (Bovine).